Here is a 592-residue protein sequence, read N- to C-terminus: MDSVETRYAHLLQPLRDLTKNWDIDLASQLGEYLEELDQMTISFDGGKTMMNFAEAALLIQGSTCIYGRKVELLHTLVFQTLDYISNKNKKRDKQGSSSDGNQEQAPSGSEGDGCEFDEIEQDENVNTHNITMKDPTEPVRIIRLPPESLIPAESHEKQKYPLLSLKGELLGSCKDFRINTFTMDEAGLMRLGSNTHFLKGVAEVQRDFSVHLPEPLQIEGEAAAANGGYDEEVDGGAEVLPPLEDHGMEVESDEWVERHEAPSEGRMLRPRPAVQPVSEEPKQLKETVDPWKLHDPYATFGEDKPLKAGKCYKVPAGLDESGKRKRKGPSKLQDFGTWFNKAFETADRKLKNGPTFPDLNYIFVSKMDQRLKVQRQMLRKRGVFVSDEELKKTYLEPENVEDQVEVIRHPDADGDDYSDEEHDNLADDLEPAEHLDDQEQIFQDLHMSRMSYEDLVKKSVDLFLVNSQKYAQETALSRRVKDWEDSINPHLAAQEISPAFDIHEYGDRIVHALSNVGVKKSFAFVVRGKENTEACRYMLAALQLANDYTVEVDKVDGLDCSVDTMELTLLTTQRAHERLKTYNATAATDIP.

Disordered stretches follow at residues 89–116 and 261–285; these read NKKRDKQGSSSDGNQEQAPSGSEGDGCE and EAPSEGRMLRPRPAVQPVSEEPKQL. A compositionally biased stretch (polar residues) spans 96 to 108; that stretch reads GSSSDGNQEQAPS.

Belongs to the CND2 H2 (condensin-2 subunit 2) family. Component of the condensin-2 complex, which contains the smc2 and smc4 heterodimer, and three non SMC subunits, ncapg2, ncaph2 and ncapd3 that probably regulate the complex.

The protein resides in the nucleus. Regulatory subunit of the condensin-2 complex, a complex that seems to provide chromosomes with an additional level of organization and rigidity and in establishing mitotic chromosome architecture. In Danio rerio (Zebrafish), this protein is Condensin-2 complex subunit H2 (ncaph2).